We begin with the raw amino-acid sequence, 445 residues long: GTPase Der (445 aa).

2 EngA-type G domains span residues 3–167 (PVIA…YADQ) and 180–353 (IKIA…AAAM). Residues 9-16 (GRPNVGKS), 56-60 (DTGGF), 119-122 (NKAE), 186-193 (GRPNVGKS), 233-237 (DTAGL), and 298-301 (NKWD) contribute to the GTP site. One can recognise a KH-like domain in the interval 354 to 438 (AKLPTPKLTR…PLRIEFRSST (85 aa)).

Belongs to the TRAFAC class TrmE-Era-EngA-EngB-Septin-like GTPase superfamily. EngA (Der) GTPase family. Associates with the 50S ribosomal subunit.

Functionally, GTPase that plays an essential role in the late steps of ribosome biogenesis. The sequence is that of GTPase Der from Burkholderia multivorans (strain ATCC 17616 / 249).